The primary structure comprises 640 residues: Translation factor GUF1, mitochondrial (640 aa).

The transit peptide at 1 to 26 (MRRLRSLYLQSSICFRRFNHYSAKDT) directs the protein to the mitochondrion. The region spanning 39 to 223 (ENYRNFSIVA…AIIDRIPPPT (185 aa)) is the tr-type G domain. Residues 48 to 55 (AHVDHGKS), 115 to 119 (DTPGH), and 169 to 172 (NKID) each bind GTP.

Belongs to the TRAFAC class translation factor GTPase superfamily. Classic translation factor GTPase family. LepA subfamily.

It is found in the mitochondrion inner membrane. It catalyses the reaction GTP + H2O = GDP + phosphate + H(+). Functionally, promotes mitochondrial protein synthesis. May act as a fidelity factor of the translation reaction, by catalyzing a one-codon backward translocation of tRNAs on improperly translocated ribosomes. Binds to mitochondrial ribosomes in a GTP-dependent manner. This Lachancea thermotolerans (strain ATCC 56472 / CBS 6340 / NRRL Y-8284) (Yeast) protein is Translation factor GUF1, mitochondrial.